Consider the following 912-residue polypeptide: Protein translocase subunit SecA (912 aa).

ATP-binding positions include Gln87, 105–109, and Asp508; that span reads GEGKT. The segment at 864-912 is disordered; it reads AEEEVEQMQGGNAPVPVSQVTRDEPKVGRNDPCPCGSGKKYKHCHGQLS. Residues Cys896, Cys898, Cys907, and His908 each contribute to the Zn(2+) site. Residues 902-912 show a composition bias toward basic residues; the sequence is KKYKHCHGQLS.

It belongs to the SecA family. Monomer and homodimer. Part of the essential Sec protein translocation apparatus which comprises SecA, SecYEG and auxiliary proteins SecDF-YajC and YidC. Requires Zn(2+) as cofactor.

The protein resides in the cell inner membrane. It is found in the cytoplasm. It catalyses the reaction ATP + H2O + cellular proteinSide 1 = ADP + phosphate + cellular proteinSide 2.. Its function is as follows. Part of the Sec protein translocase complex. Interacts with the SecYEG preprotein conducting channel. Has a central role in coupling the hydrolysis of ATP to the transfer of proteins into and across the cell membrane, serving both as a receptor for the preprotein-SecB complex and as an ATP-driven molecular motor driving the stepwise translocation of polypeptide chains across the membrane. The protein is Protein translocase subunit SecA of Xanthomonas euvesicatoria pv. vesicatoria (strain 85-10) (Xanthomonas campestris pv. vesicatoria).